Reading from the N-terminus, the 151-residue chain is Endoribonuclease YbeY (151 aa).

The Zn(2+) site is built by His-114, His-118, and His-124.

The protein belongs to the endoribonuclease YbeY family. Requires Zn(2+) as cofactor.

It localises to the cytoplasm. Functionally, single strand-specific metallo-endoribonuclease involved in late-stage 70S ribosome quality control and in maturation of the 3' terminus of the 16S rRNA. The protein is Endoribonuclease YbeY of Hamiltonella defensa subsp. Acyrthosiphon pisum (strain 5AT).